The following is a 470-amino-acid chain: Pyruvate kinase I (470 aa).

Arg32 provides a ligand contact to substrate. The K(+) site is built by Asn34, Ser36, Asp66, and Thr67. Position 34–37 (34–37 (NFSH)) interacts with ATP. ATP is bound by residues Arg73 and Lys156. Lys220 contributes to the substrate binding site. Glu222 is a binding site for Mg(2+). 3 residues coordinate substrate: Gly245, Asp246, and Thr278. A Mg(2+)-binding site is contributed by Asp246.

This sequence belongs to the pyruvate kinase family. As to quaternary structure, homotetramer. The cofactor is Mg(2+). K(+) serves as cofactor.

It carries out the reaction pyruvate + ATP = phosphoenolpyruvate + ADP + H(+). It functions in the pathway carbohydrate degradation; glycolysis; pyruvate from D-glyceraldehyde 3-phosphate: step 5/5. Belongs to type I PK; fructose 1,6-bisphosphate-activated. Its function is as follows. Catalyzes the formation of pyruvate in the last step of glycolysis, it is irreversible under physiological conditions. The reaction is critical for the control of metabolic flux in the second part of glycolysis. In Salmonella typhimurium (strain LT2 / SGSC1412 / ATCC 700720), this protein is Pyruvate kinase I (pykF).